A 186-amino-acid chain; its full sequence is MSVADIRNSAESRMSKSLDTLKVNLSKIRTGRAHAGILDHVQVEYYGSPVPVGQVANLNLVDARTISVQPYEKHMAGPIERAIRDSDLGLNPVSLGDTIRVPMPALTEERRRDLTKVVRSEGEDAKVAVRNLRREANEALKKLVKDKIISEDDERRGQDEVQKLTDRAVADIDKMVTQKEAEIMTV.

It belongs to the RRF family.

The protein localises to the cytoplasm. Functionally, responsible for the release of ribosomes from messenger RNA at the termination of protein biosynthesis. May increase the efficiency of translation by recycling ribosomes from one round of translation to another. The polypeptide is Ribosome-recycling factor (Bordetella avium (strain 197N)).